The sequence spans 146 residues: 1,4-dihydroxy-2-naphthoyl-CoA hydrolase (146 aa).

Residue aspartate 19 is part of the active site.

This sequence belongs to the 4-hydroxybenzoyl-CoA thioesterase family. DHNA-CoA hydrolase subfamily.

It catalyses the reaction 1,4-dihydroxy-2-naphthoyl-CoA + H2O = 1,4-dihydroxy-2-naphthoate + CoA + H(+). It functions in the pathway cofactor biosynthesis; phylloquinone biosynthesis. The protein operates within quinol/quinone metabolism; 1,4-dihydroxy-2-naphthoate biosynthesis; 1,4-dihydroxy-2-naphthoate from chorismate: step 7/7. Catalyzes the hydrolysis of 1,4-dihydroxy-2-naphthoyl-CoA (DHNA-CoA) to 1,4-dihydroxy-2-naphthoate (DHNA), a reaction involved in phylloquinone (vitamin K1) biosynthesis. This chain is 1,4-dihydroxy-2-naphthoyl-CoA hydrolase, found in Thermosynechococcus vestitus (strain NIES-2133 / IAM M-273 / BP-1).